Consider the following 787-residue polypeptide: Phenylalanine--tRNA ligase beta subunit (787 aa).

In terms of domain architecture, tRNA-binding spans 39–149 (APAFSGVVVA…EDAPVGTNIR (111 aa)). Residues 400 to 475 (PEAKQVGLRL…RVYGYENIPD (76 aa)) enclose the B5 domain. Residues D453, D459, E462, and E463 each contribute to the Mg(2+) site. Residues 694-786 (SKFQPVRRDL…VATEAGARLR (93 aa)) form the FDX-ACB domain.

This sequence belongs to the phenylalanyl-tRNA synthetase beta subunit family. Type 1 subfamily. In terms of assembly, tetramer of two alpha and two beta subunits. The cofactor is Mg(2+).

It is found in the cytoplasm. The catalysed reaction is tRNA(Phe) + L-phenylalanine + ATP = L-phenylalanyl-tRNA(Phe) + AMP + diphosphate + H(+). In Neisseria gonorrhoeae (strain ATCC 700825 / FA 1090), this protein is Phenylalanine--tRNA ligase beta subunit.